The chain runs to 199 residues: Probable thymidylate kinase (199 aa).

Residue 9–16 participates in ATP binding; sequence GIDGCGKT.

Belongs to the thymidylate kinase family.

The enzyme catalyses dTMP + ATP = dTDP + ADP. The polypeptide is Probable thymidylate kinase (Methanococcus maripaludis (strain DSM 14266 / JCM 13030 / NBRC 101832 / S2 / LL)).